An 83-amino-acid polypeptide reads, in one-letter code: Evasin P1124 (83 aa).

The first 28 residues, 1–28 (MAVNVFTILQLAVFAAIVLNVNLHSVSA), serve as a signal peptide directing secretion. 3 cysteine pairs are disulfide-bonded: Cys48–Cys66, Cys52–Cys68, and Cys62–Cys79. Asn51 carries N-linked (GlcNAc...) asparagine glycosylation.

The protein localises to the secreted. Functionally, salivary chemokine-binding protein which binds to host chemokines CXCL1, CXCL2, CXCL3, CXCL5, CXCL6, CXCL12 and CXCL13. This chain is Evasin P1124, found in Ixodes ricinus (Common tick).